The sequence spans 561 residues: uncharacterized protein (561 aa).

A run of 2 helical transmembrane segments spans residues 29-49 (FIFNVGSLTPTTAVLGVKKII) and 80-100 (FLFHTVGFFPIYTSTIGAVVI).

It is found in the cell membrane. This is an uncharacterized protein from Mycoplasma pneumoniae (strain ATCC 29342 / M129 / Subtype 1) (Mycoplasmoides pneumoniae).